The chain runs to 363 residues: uncharacterized protein (363 aa).

This is an uncharacterized protein from Saccharomyces cerevisiae (strain ATCC 204508 / S288c) (Baker's yeast).